We begin with the raw amino-acid sequence, 276 residues long: MAIKTYKPYTPSRRYITGLSSEDITAKPSVRSLLVKLPAHAGRNSYGRITSRHKEAGAKKLYRIIDFKRRKFGIEGKVEAIEYDPYRNCRIALIAYKDGEKRYILQPRGLSVGDIVAAAESGLDIKPGNAMKLKNIPVGTIVHNVELKPGKGGQMIRSAGAYAQLMGKEEKYVILRLASGEMRQVLAECMASIGEVGNEEWANITIGKAGRNRHRGIRPQTRGSAMNPVDHPHGGGEGKKNSGRHPVTPWGKPTKGAKTRCKKASDKLIISRRKGK.

Residues 211–276 (RNRHRGIRPQ…KLIISRRKGK (66 aa)) form a disordered region. Positions 230–240 (DHPHGGGEGKK) are enriched in basic and acidic residues.

The protein belongs to the universal ribosomal protein uL2 family. As to quaternary structure, part of the 50S ribosomal subunit. Forms a bridge to the 30S subunit in the 70S ribosome.

Its function is as follows. One of the primary rRNA binding proteins. Required for association of the 30S and 50S subunits to form the 70S ribosome, for tRNA binding and peptide bond formation. It has been suggested to have peptidyltransferase activity; this is somewhat controversial. Makes several contacts with the 16S rRNA in the 70S ribosome. The sequence is that of Large ribosomal subunit protein uL2 from Campylobacter jejuni subsp. doylei (strain ATCC BAA-1458 / RM4099 / 269.97).